The following is a 623-amino-acid chain: Kelch-like protein diablo (623 aa).

The disordered stretch occupies residues 1 to 54; that stretch reads MGDLPGSGSTAQPRDAAVTGTGGNSTAGGGSSVGSTAVDRPPSPARLSHTSEKH. Residue threonine 19 is modified to Phosphothreonine. Over residues 20–32 the composition is skewed to gly residues; sequence GTGGNSTAGGGSS. The region spanning 72 to 139 is the BTB domain; sequence CDVVLNVGGR…CYTAHIMVEE (68 aa). The region spanning 174–276 is the BACK domain; the sequence is CLGIRAFADT…SPKFLVGTVG (103 aa). Kelch repeat units lie at residues 323-369, 371-417, 418-464, 466-511, 513-558, and 559-605; these read VLFA…VLND, LYAV…VLDG, FLYA…VLGG, LYAI…VFNN, IYAV…VVNG, and QLYA…VMRA.

It participates in protein modification; protein ubiquitination. Functionally, probable substrate-specific adapter of an E3 ubiquitin-protein ligase complex which mediates the ubiquitination and subsequent proteasomal degradation of target proteins. May have a role in synapse differentiation and growth. This is Kelch-like protein diablo from Drosophila erecta (Fruit fly).